A 506-amino-acid polypeptide reads, in one-letter code: ATP synthase subunit alpha, chloroplastic (506 aa).

172 to 179 (GDRQTGKT) provides a ligand contact to ATP.

The protein belongs to the ATPase alpha/beta chains family. In terms of assembly, F-type ATPases have 2 components, CF(1) - the catalytic core - and CF(0) - the membrane proton channel. CF(1) has five subunits: alpha(3), beta(3), gamma(1), delta(1), epsilon(1). CF(0) has four main subunits: a, b, b' and c.

The protein localises to the plastid. It localises to the chloroplast thylakoid membrane. It catalyses the reaction ATP + H2O + 4 H(+)(in) = ADP + phosphate + 5 H(+)(out). Its function is as follows. Produces ATP from ADP in the presence of a proton gradient across the membrane. The alpha chain is a regulatory subunit. The sequence is that of ATP synthase subunit alpha, chloroplastic from Pleurastrum terricola (Filamentous green alga).